A 334-amino-acid polypeptide reads, in one-letter code: 4-hydroxyproline 2-epimerase (334 aa).

Cys90 serves as the catalytic Proton acceptor. Residues 91–92, His223, and Asp249 contribute to the substrate site; that span reads GH. Residue Cys253 is the Proton donor of the active site. Position 254 to 255 (254 to 255) interacts with substrate; the sequence is GT.

It belongs to the proline racemase family. In terms of assembly, homodimer.

The catalysed reaction is trans-4-hydroxy-L-proline = cis-4-hydroxy-D-proline. Functionally, catalyzes the epimerization of trans-4-hydroxy-L-proline (t4LHyp) to cis-4-hydroxy-D-proline (c4DHyp). Is likely involved in a degradation pathway that converts t4LHyp to alpha-ketoglutarate, which would allow P.denitrificans to grow on t4LHyp as a sole carbon source. Also seems to be involved in an alternative catabolic pathway that degrades trans-4-hydroxy-L-proline betaine (tHyp-B) to alpha-ketoglutarate; this pathway would permit the utilization of tHyp-B as a sole carbon and nitrogen source. The polypeptide is 4-hydroxyproline 2-epimerase (hypF) (Paracoccus denitrificans (strain Pd 1222)).